The following is a 629-amino-acid chain: Coiled-coil domain-containing protein 93 (629 aa).

The interval 1 to 23 (MGLPKGPEGQGLPEVETREDEEQ) is disordered. The segment at 1-428 (MGLPKGPEGQ…ETLKAERAPG (428 aa)) is sufficient for interaction with CCDC22. Coiled-coil stretches lie at residues 231-430 (LSAA…PGEK) and 558-599 (LRQM…LLEK). S298, S301, and S305 each carry phosphoserine. The segment at 446–629 (THNEDLDRRY…LLSKIKAKAS (184 aa)) is sufficient for interaction with WASHC2C.

Belongs to the CCDC93 family. In terms of assembly, component of the commander complex consisting of the CCC subcomplex and the retriever subcomplex. Component of the CCC (COMMD/CCDC22/CCDC93) subcomplex consisting of COMMD1, COMMD2, COMMD3, COMMD4, COMMD5, COMMD6, COMMD7, COMMD8, COMMD9, COMMD10, CCDC22 and CCDC93. Forms a coiled-coil heterodimer with CCDC22; this heterodimer interacts with the guanine nucleotide exchange factor DENND10; the interaction is direct. Interacts with WASHC1. Interacts directly with WASHC2C. Interacts with SNX17 and SNX31.

The protein resides in the early endosome. In terms of biological role, component of the commander complex that is essential for endosomal recycling of transmembrane cargos; the commander complex is composed of composed of the CCC subcomplex and the retriever subcomplex. Component of the CCC complex, which is involved in the regulation of endosomal recycling of surface proteins, including integrins, signaling receptor and channels. The CCC complex associates with SNX17, retriever and WASH complexes to prevent lysosomal degradation and promote cell surface recycling of numerous cargos such as integrins ITGA5:ITGB1. Involved in copper-dependent ATP7A trafficking between the trans-Golgi network and vesicles in the cell periphery; the function is proposed to depend on its association within the CCC complex and cooperation with the WASH complex on early endosomes and is dependent on its interaction with WASHC2C. In Mus musculus (Mouse), this protein is Coiled-coil domain-containing protein 93 (Ccdc93).